We begin with the raw amino-acid sequence, 445 residues long: 3-dehydroquinate synthase, chloroplastic (445 aa).

The transit peptide at 1–68 directs the protein to the chloroplast; it reads MAAFSLSAKQ…RASASSTAPV (68 aa). Residues asparagine 122, 153-155, lysine 158, 186-191, 211-212, lysine 224, lysine 233, and 251-254 contribute to the NAD(+) site; these read DGE, GGVIGD, TT, and TLNT. Glutamate 266 provides a ligand contact to a divalent metal cation. Lysine 308 contributes to the NAD(+) binding site. Residues histidine 329 and histidine 346 each coordinate a divalent metal cation.

Belongs to the sugar phosphate cyclases superfamily. Dehydroquinate synthase family. Homodimer. A divalent metal cation is required as a cofactor. It depends on NAD(+) as a cofactor.

Its subcellular location is the plastid. It localises to the chloroplast. The catalysed reaction is 7-phospho-2-dehydro-3-deoxy-D-arabino-heptonate = 3-dehydroquinate + phosphate. Its pathway is metabolic intermediate biosynthesis; chorismate biosynthesis; chorismate from D-erythrose 4-phosphate and phosphoenolpyruvate: step 2/7. In terms of biological role, catalyzes the second step in the shikimate pathway. The protein is 3-dehydroquinate synthase, chloroplastic (DHQS) of Actinidia chinensis var. chinensis (Chinese soft-hair kiwi).